A 36-amino-acid chain; its full sequence is Beta-amanitin proprotein (36 aa).

The propeptide occupies 1–10; sequence MSDINATRLP. Residues 11–18 constitute a cross-link (cyclopeptide (Ile-Pro)); it reads IWGIGCDP. Positions 12–16 form a cross-link, 2'-cysteinyl-6'-hydroxytryptophan sulfoxide (Trp-Cys); it reads WGIGC. A propeptide spanning residues 19 to 36 is cleaved from the precursor; the sequence is CIGDDVTALLTRGEASLC.

The protein belongs to the MSDIN fungal toxin family. Post-translationally, processed by the macrocyclase-peptidase enzyme POPB to yield a toxic cyclic decapeptide. POPB first removes 10 residues from the N-terminus. Conformational trapping of the remaining peptide forces the enzyme to release this intermediate rather than proceed to macrocyclization. The enzyme rebinds the remaining peptide in a different conformation and catalyzes macrocyclization of the N-terminal 8 residues.

Toxin belonging to the bicyclic octapeptides amatoxins that acts by binding non-competitively to RNA polymerase II and greatly slowing the elongation of transcripts from target promoters. This is Beta-amanitin proprotein from Amanita phalloides (Death cap).